Reading from the N-terminus, the 236-residue chain is Methylosome subunit pICln (236 aa).

Residues 1-20 (MSFLKSFPPPGPTEGLRHQQ) form a disordered region. Serine 2 is modified (N-acetylserine). 6 positions are modified to phosphoserine: serine 101, serine 143, serine 192, serine 194, serine 197, and serine 209. Threonine 222 is subject to Phosphothreonine.

This sequence belongs to the pICln (TC 1.A.47) family. In terms of assembly, component of the methylosome, a 20S complex containing at least PRMT5/SKB1, WDR77/MEP50 and CLNS1A/pICln. May mediate SNRPD1 and SNRPD3 methylation. Forms a 6S pICln-Sm complex composed of CLNS1A/pICln, SNRPD1, SNRPD2, SNRPE, SNRPF and SNRPG; ring-like structure where CLNS1A/pICln mimics additional Sm proteins and which is unable to assemble into the core snRNP. Interacts with LSM10 and LSM11. Widely distributed but expressed more abundantly in nonpigmented ciliary epithelial cells than in pigmented ones.

It localises to the cytoplasm. It is found in the cytosol. The protein resides in the nucleus. Its subcellular location is the cytoskeleton. Involved in both the assembly of spliceosomal snRNPs and the methylation of Sm proteins. Chaperone that regulates the assembly of spliceosomal U1, U2, U4 and U5 small nuclear ribonucleoproteins (snRNPs), the building blocks of the spliceosome, and thereby plays an important role in the splicing of cellular pre-mRNAs. Most spliceosomal snRNPs contain a common set of Sm proteins SNRPB, SNRPD1, SNRPD2, SNRPD3, SNRPE, SNRPF and SNRPG that assemble in a heptameric protein ring on the Sm site of the small nuclear RNA to form the core snRNP (Sm core). In the cytosol, the Sm proteins SNRPD1, SNRPD2, SNRPE, SNRPF and SNRPG are trapped in an inactive 6S pICln-Sm complex by the chaperone CLNS1A that controls the assembly of the core snRNP. Dissociation by the SMN complex of CLNS1A from the trapped Sm proteins and their transfer to an SMN-Sm complex triggers the assembly of core snRNPs and their transport to the nucleus. The protein is Methylosome subunit pICln (CLNS1A) of Oryctolagus cuniculus (Rabbit).